Here is a 250-residue protein sequence, read N- to C-terminus: MSTSMREMLEAGVHFGHQTRFWNPKMAPYIFGHRNRIHIINLEKSLPMFQDAMKFAKQLSANRGTILMVGTKRQAREIVATEAKRAGVPYVDQRWLGGMLTNFKTVKTSIKRLKEMKAQQEAGLDSISKKEQLTFKREIEKLEKDIGGIQDMNALPDAIFVIDVGFHKIAILEAKKLGIPLIGVVDSNHSPIGIDYVIPGNDDSSKAVALYARGIADAILEGRANAVNDVVKAVSAESSDEFVEVENAAN.

This sequence belongs to the universal ribosomal protein uS2 family.

The polypeptide is Small ribosomal subunit protein uS2 (Polaromonas sp. (strain JS666 / ATCC BAA-500)).